A 239-amino-acid chain; its full sequence is Cytochrome c oxidase subunit 2 (239 aa).

Residues Met-1–His-26 are Mitochondrial intermembrane-facing. Residues Val-27–Ser-48 traverse the membrane as a helical segment. Topologically, residues Lys-49–Glu-62 are mitochondrial matrix. The chain crosses the membrane as a helical span at residues Thr-63–Lys-82. The Mitochondrial intermembrane segment spans residues Leu-83 to Arg-239. Residues His-161, Cys-196, Glu-198, Cys-200, His-204, and Met-207 each coordinate Cu cation. Glu-198 contributes to the Mg(2+) binding site.

It belongs to the cytochrome c oxidase subunit 2 family. As to quaternary structure, component of the cytochrome c oxidase (complex IV, CIV), a multisubunit enzyme composed of a catalytic core of 3 subunits and several supernumerary subunits. The complex exists as a monomer or a dimer and forms supercomplexes (SCs) in the inner mitochondrial membrane with ubiquinol-cytochrome c oxidoreductase (cytochrome b-c1 complex, complex III, CIII). Cu cation serves as cofactor.

It is found in the mitochondrion inner membrane. It carries out the reaction 4 Fe(II)-[cytochrome c] + O2 + 8 H(+)(in) = 4 Fe(III)-[cytochrome c] + 2 H2O + 4 H(+)(out). Component of the cytochrome c oxidase, the last enzyme in the mitochondrial electron transport chain which drives oxidative phosphorylation. The respiratory chain contains 3 multisubunit complexes succinate dehydrogenase (complex II, CII), ubiquinol-cytochrome c oxidoreductase (cytochrome b-c1 complex, complex III, CIII) and cytochrome c oxidase (complex IV, CIV), that cooperate to transfer electrons derived from NADH and succinate to molecular oxygen, creating an electrochemical gradient over the inner membrane that drives transmembrane transport and the ATP synthase. Cytochrome c oxidase is the component of the respiratory chain that catalyzes the reduction of oxygen to water. Electrons originating from reduced cytochrome c in the intermembrane space (IMS) are transferred via the dinuclear copper A center (CU(A)) of subunit 2 and heme A of subunit 1 to the active site in subunit 1, a binuclear center (BNC) formed by heme A3 and copper B (CU(B)). The BNC reduces molecular oxygen to 2 water molecules using 4 electrons from cytochrome c in the IMS and 4 protons from the mitochondrial matrix. In Branchiostoma lanceolatum (Common lancelet), this protein is Cytochrome c oxidase subunit 2 (COII).